The sequence spans 556 residues: 2-succinyl-5-enolpyruvyl-6-hydroxy-3-cyclohexene-1-carboxylate synthase (556 aa).

The protein belongs to the TPP enzyme family. MenD subfamily. As to quaternary structure, homodimer. Requires Mg(2+) as cofactor. Mn(2+) is required as a cofactor. The cofactor is thiamine diphosphate.

The enzyme catalyses isochorismate + 2-oxoglutarate + H(+) = 5-enolpyruvoyl-6-hydroxy-2-succinyl-cyclohex-3-ene-1-carboxylate + CO2. It participates in quinol/quinone metabolism; 1,4-dihydroxy-2-naphthoate biosynthesis; 1,4-dihydroxy-2-naphthoate from chorismate: step 2/7. Its pathway is quinol/quinone metabolism; menaquinone biosynthesis. In terms of biological role, catalyzes the thiamine diphosphate-dependent decarboxylation of 2-oxoglutarate and the subsequent addition of the resulting succinic semialdehyde-thiamine pyrophosphate anion to isochorismate to yield 2-succinyl-5-enolpyruvyl-6-hydroxy-3-cyclohexene-1-carboxylate (SEPHCHC). The chain is 2-succinyl-5-enolpyruvyl-6-hydroxy-3-cyclohexene-1-carboxylate synthase from Escherichia coli O127:H6 (strain E2348/69 / EPEC).